Reading from the N-terminus, the 272-residue chain is MPKITKIEVQKKNKERFNLFLDEQFEMGIDIDTLVKFNLKKGQQLEAADMAEIQKYDHYRIGLNKAIQYLSYKKRTEKEVIQYLQKEEISEQAISEVIEYCYREKLIDHQDYAESLKNTMIRTTDKGPKIYQQKLYQLGIEPNIIEIFTELYREQQELDDIIQIAEKISKTKKGPQNKVKEKVMQSLIQKGFEMETIHAVLNEMDFTQDEAVLDDLLQRDLEKIYNKNRKKYTQQKLISKTIEGLMRKGYKYDKIKAKLEESGIADGTEEIE.

The protein belongs to the RecX family.

The protein resides in the cytoplasm. In terms of biological role, modulates RecA activity. In Staphylococcus aureus (strain Newman), this protein is Regulatory protein RecX.